A 92-amino-acid polypeptide reads, in one-letter code: Small ribosomal subunit protein uS19c (92 aa).

The protein belongs to the universal ribosomal protein uS19 family.

It localises to the plastid. Its subcellular location is the chloroplast. Functionally, protein S19 forms a complex with S13 that binds strongly to the 16S ribosomal RNA. The chain is Small ribosomal subunit protein uS19c from Pinus koraiensis (Korean pine).